We begin with the raw amino-acid sequence, 454 residues long: Jacalin-related lectin 37 (454 aa).

In terms of domain architecture, Jacalin-type lectin spans 295 to 438; that stretch reads SRFTPPRGIQ…LTALGVHFSP (144 aa).

The protein belongs to the jacalin lectin family.

In Arabidopsis thaliana (Mouse-ear cress), this protein is Jacalin-related lectin 37 (JAL37).